A 357-amino-acid chain; its full sequence is UDP-N-acetylglucosamine--N-acetylmuramyl-(pentapeptide) pyrophosphoryl-undecaprenol N-acetylglucosamine transferase (357 aa).

Residues 15-17, asparagine 123, arginine 164, serine 190, and glutamine 284 each bind UDP-N-acetyl-alpha-D-glucosamine; that span reads TGG.

The protein belongs to the glycosyltransferase 28 family. MurG subfamily.

The protein resides in the cell inner membrane. The catalysed reaction is di-trans,octa-cis-undecaprenyl diphospho-N-acetyl-alpha-D-muramoyl-L-alanyl-D-glutamyl-meso-2,6-diaminopimeloyl-D-alanyl-D-alanine + UDP-N-acetyl-alpha-D-glucosamine = di-trans,octa-cis-undecaprenyl diphospho-[N-acetyl-alpha-D-glucosaminyl-(1-&gt;4)]-N-acetyl-alpha-D-muramoyl-L-alanyl-D-glutamyl-meso-2,6-diaminopimeloyl-D-alanyl-D-alanine + UDP + H(+). It participates in cell wall biogenesis; peptidoglycan biosynthesis. In terms of biological role, cell wall formation. Catalyzes the transfer of a GlcNAc subunit on undecaprenyl-pyrophosphoryl-MurNAc-pentapeptide (lipid intermediate I) to form undecaprenyl-pyrophosphoryl-MurNAc-(pentapeptide)GlcNAc (lipid intermediate II). In Synechococcus elongatus (strain ATCC 33912 / PCC 7942 / FACHB-805) (Anacystis nidulans R2), this protein is UDP-N-acetylglucosamine--N-acetylmuramyl-(pentapeptide) pyrophosphoryl-undecaprenol N-acetylglucosamine transferase.